Reading from the N-terminus, the 150-residue chain is Nucleoside diphosphate kinase (150 aa).

Residues lysine 9, phenylalanine 57, arginine 85, threonine 91, arginine 102, and asparagine 112 each coordinate ATP. Catalysis depends on histidine 115, which acts as the Pros-phosphohistidine intermediate.

This sequence belongs to the NDK family. As to quaternary structure, homotetramer. Mg(2+) serves as cofactor.

The protein resides in the cytoplasm. The enzyme catalyses a 2'-deoxyribonucleoside 5'-diphosphate + ATP = a 2'-deoxyribonucleoside 5'-triphosphate + ADP. The catalysed reaction is a ribonucleoside 5'-diphosphate + ATP = a ribonucleoside 5'-triphosphate + ADP. Its function is as follows. Major role in the synthesis of nucleoside triphosphates other than ATP. The ATP gamma phosphate is transferred to the NDP beta phosphate via a ping-pong mechanism, using a phosphorylated active-site intermediate. The chain is Nucleoside diphosphate kinase from Thermosynechococcus vestitus (strain NIES-2133 / IAM M-273 / BP-1).